The chain runs to 223 residues: Endonuclease V (223 aa).

2 residues coordinate Mg(2+): Asp-35 and Asp-103.

The protein belongs to the endonuclease V family. Requires Mg(2+) as cofactor.

It is found in the cytoplasm. It carries out the reaction Endonucleolytic cleavage at apurinic or apyrimidinic sites to products with a 5'-phosphate.. Functionally, DNA repair enzyme involved in the repair of deaminated bases. Selectively cleaves double-stranded DNA at the second phosphodiester bond 3' to a deoxyinosine leaving behind the intact lesion on the nicked DNA. This chain is Endonuclease V, found in Salmonella schwarzengrund (strain CVM19633).